Reading from the N-terminus, the 232-residue chain is 2-C-methyl-D-erythritol 4-phosphate cytidylyltransferase (232 aa).

This sequence belongs to the IspD/TarI cytidylyltransferase family. IspD subfamily.

It catalyses the reaction 2-C-methyl-D-erythritol 4-phosphate + CTP + H(+) = 4-CDP-2-C-methyl-D-erythritol + diphosphate. It functions in the pathway isoprenoid biosynthesis; isopentenyl diphosphate biosynthesis via DXP pathway; isopentenyl diphosphate from 1-deoxy-D-xylulose 5-phosphate: step 2/6. In terms of biological role, catalyzes the formation of 4-diphosphocytidyl-2-C-methyl-D-erythritol from CTP and 2-C-methyl-D-erythritol 4-phosphate (MEP). This Synechococcus sp. (strain ATCC 27144 / PCC 6301 / SAUG 1402/1) (Anacystis nidulans) protein is 2-C-methyl-D-erythritol 4-phosphate cytidylyltransferase.